Here is a 184-residue protein sequence, read N- to C-terminus: Ribosome-recycling factor (184 aa).

It belongs to the RRF family.

Its subcellular location is the cytoplasm. Its function is as follows. Responsible for the release of ribosomes from messenger RNA at the termination of protein biosynthesis. May increase the efficiency of translation by recycling ribosomes from one round of translation to another. The sequence is that of Ribosome-recycling factor from Psychrobacter sp. (strain PRwf-1).